The following is a 55-amino-acid chain: Large ribosomal subunit protein bL33 (55 aa).

This sequence belongs to the bacterial ribosomal protein bL33 family.

The protein is Large ribosomal subunit protein bL33 of Escherichia coli (strain K12 / DH10B).